We begin with the raw amino-acid sequence, 145 residues long: Ribonuclease H (145 aa).

Residues 1-141 form the RNase H type-1 domain; it reads MQEVTIYSDG…ADALANRGVA (141 aa). 4 residues coordinate Mg(2+): D9, E47, D69, and D133.

Belongs to the RNase H family. In terms of assembly, monomer. Requires Mg(2+) as cofactor.

The protein localises to the cytoplasm. The enzyme catalyses Endonucleolytic cleavage to 5'-phosphomonoester.. Functionally, endonuclease that specifically degrades the RNA of RNA-DNA hybrids. The protein is Ribonuclease H of Cupriavidus metallidurans (strain ATCC 43123 / DSM 2839 / NBRC 102507 / CH34) (Ralstonia metallidurans).